The sequence spans 257 residues: 3-deoxy-manno-octulosonate cytidylyltransferase (257 aa).

The protein belongs to the KdsB family.

The protein resides in the cytoplasm. The catalysed reaction is 3-deoxy-alpha-D-manno-oct-2-ulosonate + CTP = CMP-3-deoxy-beta-D-manno-octulosonate + diphosphate. The protein operates within nucleotide-sugar biosynthesis; CMP-3-deoxy-D-manno-octulosonate biosynthesis; CMP-3-deoxy-D-manno-octulosonate from 3-deoxy-D-manno-octulosonate and CTP: step 1/1. It participates in bacterial outer membrane biogenesis; lipopolysaccharide biosynthesis. In terms of biological role, activates KDO (a required 8-carbon sugar) for incorporation into bacterial lipopolysaccharide in Gram-negative bacteria. This chain is 3-deoxy-manno-octulosonate cytidylyltransferase, found in Xylella fastidiosa (strain 9a5c).